The primary structure comprises 348 residues: Protein RecA (348 aa).

65–72 serves as a coordination point for ATP; sequence GPESSGKT.

The protein belongs to the RecA family.

Its subcellular location is the cytoplasm. Can catalyze the hydrolysis of ATP in the presence of single-stranded DNA, the ATP-dependent uptake of single-stranded DNA by duplex DNA, and the ATP-dependent hybridization of homologous single-stranded DNAs. It interacts with LexA causing its activation and leading to its autocatalytic cleavage. In Enterococcus gallinarum, this protein is Protein RecA.